Reading from the N-terminus, the 344-residue chain is Protein AIR2 (344 aa).

Positions 1 to 23 (MEKNTAPFVVDTAPTTPPDKLVA) are disordered. Phosphoserine is present on residues Ser31 and Ser49. 3 CCHC-type zinc fingers span residues 61–78 (PKCNNCSQRGHLKKDCPH), 99–116 (IQCSKCDEVGHYRSQCPH), and 162–179 (IYCYNCGGKGHFGDDCKE). Disordered stretches follow at residues 227–274 (YDED…PTIR) and 312–344 (STYVDNNSISNSSNYRNYNSYQPYRSGTLGKRR). The segment covering 317 to 337 (NNSISNSSNYRNYNSYQPYRS) has biased composition (low complexity).

Belongs to the AIR1 family. In terms of assembly, component of the TRAMP complex (also called TRF4 complex) composed of at least HUL4, MTR4, PAP2/TRF4 and either AIR1 or AIR2. Interacts with HMT1 and NPL3. The interaction with NPL3 requires the presence of HMT1. Interacts directly with PAP2.

It is found in the nucleus. In terms of biological role, component of the TRAMP (TRF4) complex which has a poly(A) RNA polymerase activity and is involved in a post-transcriptional quality control mechanism limiting inappropriate expression of genetic information. Polyadenylation is required for the degradative activity of the exosome on several of its nuclear RNA substrates like cryptic transcripts generated by RNA polymerase II and III, or hypomethylated pre-tRNAi-Met. Both complexes polyadenylate RNA processing and degradation intermediates of snRNAs, snoRNAs and mRNAs that accumulate in strains lacking a functional exosome. AIR2 also inhibits the methylation of NPL3 mediated by HMT1 through its interaction with HMT1. In Saccharomyces cerevisiae (strain ATCC 204508 / S288c) (Baker's yeast), this protein is Protein AIR2 (AIR2).